Reading from the N-terminus, the 221-residue chain is Thymidylate kinase (221 aa).

11–18 (GPDGAGKT) contributes to the ATP binding site.

It belongs to the thymidylate kinase family.

The catalysed reaction is dTMP + ATP = dTDP + ADP. Functionally, phosphorylation of dTMP to form dTDP in both de novo and salvage pathways of dTTP synthesis. This Lactiplantibacillus plantarum (strain ATCC BAA-793 / NCIMB 8826 / WCFS1) (Lactobacillus plantarum) protein is Thymidylate kinase.